A 219-amino-acid chain; its full sequence is Deoxyribose-phosphate aldolase (219 aa).

The Proton donor/acceptor role is filled by aspartate 92. Catalysis depends on lysine 154, which acts as the Schiff-base intermediate with acetaldehyde. The Proton donor/acceptor role is filled by lysine 183.

It belongs to the DeoC/FbaB aldolase family. DeoC type 1 subfamily.

It localises to the cytoplasm. It carries out the reaction 2-deoxy-D-ribose 5-phosphate = D-glyceraldehyde 3-phosphate + acetaldehyde. It functions in the pathway carbohydrate degradation; 2-deoxy-D-ribose 1-phosphate degradation; D-glyceraldehyde 3-phosphate and acetaldehyde from 2-deoxy-alpha-D-ribose 1-phosphate: step 2/2. Functionally, catalyzes a reversible aldol reaction between acetaldehyde and D-glyceraldehyde 3-phosphate to generate 2-deoxy-D-ribose 5-phosphate. The protein is Deoxyribose-phosphate aldolase of Dictyoglomus turgidum (strain DSM 6724 / Z-1310).